A 1407-amino-acid polypeptide reads, in one-letter code: DNA-directed RNA polymerase subunit beta' (1407 aa).

4 residues coordinate Zn(2+): Cys70, Cys72, Cys85, and Cys88. Positions 460, 462, and 464 each coordinate Mg(2+). Zn(2+)-binding residues include Cys814, Cys888, Cys895, and Cys898. Lys972 is modified (N6-acetyllysine).

This sequence belongs to the RNA polymerase beta' chain family. As to quaternary structure, the RNAP catalytic core consists of 2 alpha, 1 beta, 1 beta' and 1 omega subunit. When a sigma factor is associated with the core the holoenzyme is formed, which can initiate transcription. Mg(2+) serves as cofactor. Requires Zn(2+) as cofactor.

The catalysed reaction is RNA(n) + a ribonucleoside 5'-triphosphate = RNA(n+1) + diphosphate. Functionally, DNA-dependent RNA polymerase catalyzes the transcription of DNA into RNA using the four ribonucleoside triphosphates as substrates. This Escherichia coli O1:K1 / APEC protein is DNA-directed RNA polymerase subunit beta'.